Reading from the N-terminus, the 322-residue chain is Probable cardiolipin synthase (CMP-forming) (322 aa).

3 consecutive transmembrane segments (helical) span residues 143 to 163 (IGYV…AFAG), 199 to 219 (LVIS…IVVF), and 289 to 309 (LQGL…SYVM).

Belongs to the CDP-alcohol phosphatidyltransferase class-I family.

It is found in the mitochondrion inner membrane. It carries out the reaction a CDP-1,2-diacyl-sn-glycerol + a 1,2-diacyl-sn-glycero-3-phospho-(1'-sn-glycerol) = a cardiolipin + CMP + H(+). Functionally, catalyzes the synthesis of cardiolipin (CL) (diphosphatidylglycerol) by specifically transferring a phosphatidyl group from CDP-diacylglycerol to phosphatidylglycerol (PG). CL is a key phospholipid in mitochondrial membranes and plays important roles in maintaining the functional integrity and dynamics of mitochondria under both optimal and stress conditions. The polypeptide is Probable cardiolipin synthase (CMP-forming) (CLS) (Drosophila melanogaster (Fruit fly)).